The chain runs to 241 residues: Uridylate kinase (241 aa).

Residues 15–18 (KLSG), Gly-58, and Arg-62 each bind ATP. UMP-binding positions include Asp-77 and 138-145 (TGNPYFTT). Residues Thr-165, Tyr-171, and Asp-174 each contribute to the ATP site.

It belongs to the UMP kinase family. Homohexamer.

The protein resides in the cytoplasm. The enzyme catalyses UMP + ATP = UDP + ADP. It participates in pyrimidine metabolism; CTP biosynthesis via de novo pathway; UDP from UMP (UMPK route): step 1/1. Its activity is regulated as follows. Inhibited by UTP. Functionally, catalyzes the reversible phosphorylation of UMP to UDP. The sequence is that of Uridylate kinase from Desulfotalea psychrophila (strain LSv54 / DSM 12343).